Reading from the N-terminus, the 177-residue chain is ATP synthase subunit delta (177 aa).

This sequence belongs to the ATPase delta chain family. In terms of assembly, F-type ATPases have 2 components, F(1) - the catalytic core - and F(0) - the membrane proton channel. F(1) has five subunits: alpha(3), beta(3), gamma(1), delta(1), epsilon(1). F(0) has three main subunits: a(1), b(2) and c(10-14). The alpha and beta chains form an alternating ring which encloses part of the gamma chain. F(1) is attached to F(0) by a central stalk formed by the gamma and epsilon chains, while a peripheral stalk is formed by the delta and b chains.

It localises to the cell inner membrane. F(1)F(0) ATP synthase produces ATP from ADP in the presence of a proton or sodium gradient. F-type ATPases consist of two structural domains, F(1) containing the extramembraneous catalytic core and F(0) containing the membrane proton channel, linked together by a central stalk and a peripheral stalk. During catalysis, ATP synthesis in the catalytic domain of F(1) is coupled via a rotary mechanism of the central stalk subunits to proton translocation. In terms of biological role, this protein is part of the stalk that links CF(0) to CF(1). It either transmits conformational changes from CF(0) to CF(1) or is implicated in proton conduction. In Yersinia enterocolitica serotype O:8 / biotype 1B (strain NCTC 13174 / 8081), this protein is ATP synthase subunit delta.